We begin with the raw amino-acid sequence, 249 residues long: Probable endopeptidase YafL (249 aa).

The first 17 residues, 1–17 (MSLPSIPSFVLSGLLLI), serve as a signal peptide directing secretion. Residue Cys-18 is the site of N-palmitoyl cysteine attachment. A lipid anchor (S-diacylglycerol cysteine) is attached at Cys-18. Residues 116-243 (HNITEVAIHR…DHFLGARRIL (128 aa)) form the NlpC/P60 domain. The Nucleophile role is filled by Cys-147. Residue His-202 is the Proton acceptor of the active site. Glu-214 is a catalytic residue.

Belongs to the peptidase C40 family.

The protein localises to the cell membrane. This chain is Probable endopeptidase YafL (yafL), found in Escherichia coli (strain K12).